Here is a 785-residue protein sequence, read N- to C-terminus: Sexual differentiation process protein isp4 (785 aa).

The disordered stretch occupies residues 1–28 (MIGSINESPIEEHMNDSPSTKEKADSVD). Over residues 10-26 (IEEHMNDSPSTKEKADS) the composition is skewed to basic and acidic residues. 16 helical membrane passes run 94–114 (MWTI…FFSL), 121–141 (LSVL…DLIF), 167–187 (LIVV…IILA), 196–216 (FGFG…YGLA), 264–284 (FFLY…YIFQ), 339–359 (LMNI…ALNF), 413–433 (ALAF…VILY), 461–481 (VPFY…MGTI), 490–510 (WWVI…IGIV), 512–532 (AITN…GYMY), 537–557 (LAMM…LAFA), 572–592 (IMFY…IGVL), 611–631 (YTCP…VIGP), 642–662 (TGLQ…WALW), 683–703 (GYIP…GLFF), and 732–752 (LSVI…PDWW).

The protein belongs to the oligopeptide OPT transporter family.

It is found in the endoplasmic reticulum membrane. In Schizosaccharomyces pombe (strain 972 / ATCC 24843) (Fission yeast), this protein is Sexual differentiation process protein isp4 (isp4).